The primary structure comprises 278 residues: Probable endonuclease 4 (278 aa).

Zn(2+) is bound by residues H69, H109, E145, D179, H182, H216, D229, H231, and E261.

The protein belongs to the AP endonuclease 2 family. Zn(2+) is required as a cofactor.

The enzyme catalyses Endonucleolytic cleavage to 5'-phosphooligonucleotide end-products.. In terms of biological role, endonuclease IV plays a role in DNA repair. It cleaves phosphodiester bonds at apurinic or apyrimidinic (AP) sites, generating a 3'-hydroxyl group and a 5'-terminal sugar phosphate. The chain is Probable endonuclease 4 from Buchnera aphidicola subsp. Baizongia pistaciae (strain Bp).